The sequence spans 578 residues: MAVSWRSWLANEGVKHLCLFIWLSMNVLLFWKTFLLYNQGPEYHYLHQMLGLGLCLSRASASVLNLNCSLILLPMCRTLLAYLRGSQKVPSRRTRRLLDKSRTFHITCGVTICIFSGVHVAAHLVNALNFSVNYSEDFVELNAARYRDEDPRKLLFTTVPGLTGVCMVVVLFLMITASTYAIRVSNYDIFWYTHNLFFVFYMLLTLHVSGGLLKYQTNLDTHPPGCISLNRTSSQNISLPEYFSEHFHEPFPEGFSKPEEFTQNTFVKICMEEPRFQANFPQTWLWISGPLCLYCAERLYRYIRSNKPVTIISVISHPSDVMEIRMVKENFKARPGQYITLHCPSVSALENHPFTLTMCPTETKATFGVHLKIVGDWTERFRDLLLPPSSQDSEILPFIQSRNYPKLYIDGPFGSPFEESLNYEVSLCVAGGIGVTPFASILNTLLDDWKPYKLRRLYFIWVCRDIQSFRWFADLLCMLHNKFWQENRPDYVNIQLYLSQTDGIQKIIGEKYHALNSRLFIGRPRWKLLFDEIAKYNRGKTVGVFCCGPNSLSKTLHKLSNQINSYGTRFEYNKESFS.

Over 1–16 the chain is Cytoplasmic; that stretch reads MAVSWRSWLANEGVKH. Residues 17–37 traverse the membrane as a helical segment; the sequence is LCLFIWLSMNVLLFWKTFLLY. The Extracellular portion of the chain corresponds to 38–62; the sequence is NQGPEYHYLHQMLGLGLCLSRASAS. Positions 58–303 constitute a Ferric oxidoreductase domain; that stretch reads RASASVLNLN…YCAERLYRYI (246 aa). The chain crosses the membrane as a helical span at residues 63–83; sequence VLNLNCSLILLPMCRTLLAYL. Over 84-103 the chain is Cytoplasmic; sequence RGSQKVPSRRTRRLLDKSRT. A helical transmembrane segment spans residues 104 to 124; the sequence is FHITCGVTICIFSGVHVAAHL. Residues 125-154 lie on the Extracellular side of the membrane; sequence VNALNFSVNYSEDFVELNAARYRDEDPRKL. A glycan (N-linked (GlcNAc...) asparagine) is linked at asparagine 133. A helical membrane pass occupies residues 155 to 175; that stretch reads LFTTVPGLTGVCMVVVLFLMI. The Cytoplasmic portion of the chain corresponds to 176-188; that stretch reads TASTYAIRVSNYD. The helical transmembrane segment at 189–209 threads the bilayer; the sequence is IFWYTHNLFFVFYMLLTLHVS. Over 210 to 424 the chain is Extracellular; sequence GGLLKYQTNL…SPFEESLNYE (215 aa). An E-loop; essential for H2O2 generating catalytic activity region spans residues 218–273; the sequence is NLDTHPPGCISLNRTSSQNISLPEYFSEHFHEPFPEGFSKPEEFTQNTFVKICMEE. An N-linked (GlcNAc...) asparagine glycan is attached at asparagine 230. Positions 248–575 are mediates interaction with TLR4; the sequence is HEPFPEGFSK…YGTRFEYNKE (328 aa). Residues 304-419 form the FAD-binding FR-type domain; sequence RSNKPVTIIS…DGPFGSPFEE (116 aa). A helical membrane pass occupies residues 425-445; the sequence is VSLCVAGGIGVTPFASILNTL. At 446 to 578 the chain is on the cytoplasmic side; sequence LDDWKPYKLR…RFEYNKESFS (133 aa).

In terms of assembly, interacts with, relocalizes and stabilizes CYBA/p22phox. Interacts with TLR4. Interacts with protein disulfide isomerase. Interacts with PPP1R15A. Interacts with LRRC8A; this interaction prevents the ubiquitin-mediated degradation of LRRC8A. Requires heme as cofactor. N-glycosylation is required for the function.

The protein resides in the cytoplasm. It localises to the endoplasmic reticulum membrane. Its subcellular location is the cell membrane. It is found in the cell junction. The protein localises to the focal adhesion. The protein resides in the nucleus. It carries out the reaction NADPH + 2 O2 = 2 superoxide + NADP(+) + H(+). It catalyses the reaction NADPH + O2 + H(+) = H2O2 + NADP(+). With respect to regulation, activated by insulin. Inhibited by diphenylene iodonium. Inhibited by plumbagin. Activated by phorbol 12-myristate 13-acetate (PMA). Its function is as follows. NADPH oxidase that catalyzes predominantly the reduction of oxygen to H2O2. Can also catalyze to a smaller extent, the reduction of oxygen to superoxide. May function as an oxygen sensor regulating the KCNK3/TASK-1 potassium channel and HIF1A activity. May regulate insulin signaling cascade. May play a role in apoptosis, bone resorption and lipolysaccharide-mediated activation of NFKB. May produce superoxide in the nucleus and play a role in regulating gene expression upon cell stimulation. Promotes ferroptosis, reactive oxygen species production and reduced glutathione (GSH) levels by activating NLRP3 inflammasome activation and cytokine release. This chain is NADPH oxidase 4 (NOX4), found in Pongo abelii (Sumatran orangutan).